A 211-amino-acid polypeptide reads, in one-letter code: Pyridoxine/pyridoxamine 5'-phosphate oxidase (211 aa).

Substrate is bound by residues 7–10 (RREY) and Lys-65. Residues 60 to 65 (RIVLLK), 75 to 76 (YT), Arg-81, Lys-82, and Gln-104 each bind FMN. Residues Tyr-122, Arg-126, and Ser-130 each contribute to the substrate site. Residues 139–140 (QS) and Trp-184 contribute to the FMN site. 190–192 (RLH) lines the substrate pocket. Residue Arg-194 coordinates FMN.

This sequence belongs to the pyridoxamine 5'-phosphate oxidase family. As to quaternary structure, homodimer. Requires FMN as cofactor.

It carries out the reaction pyridoxamine 5'-phosphate + O2 + H2O = pyridoxal 5'-phosphate + H2O2 + NH4(+). The catalysed reaction is pyridoxine 5'-phosphate + O2 = pyridoxal 5'-phosphate + H2O2. It functions in the pathway cofactor metabolism; pyridoxal 5'-phosphate salvage; pyridoxal 5'-phosphate from pyridoxamine 5'-phosphate: step 1/1. Its pathway is cofactor metabolism; pyridoxal 5'-phosphate salvage; pyridoxal 5'-phosphate from pyridoxine 5'-phosphate: step 1/1. Catalyzes the oxidation of either pyridoxine 5'-phosphate (PNP) or pyridoxamine 5'-phosphate (PMP) into pyridoxal 5'-phosphate (PLP). The protein is Pyridoxine/pyridoxamine 5'-phosphate oxidase of Vibrio vulnificus (strain CMCP6).